A 264-amino-acid chain; its full sequence is MGRGKIEIKRIENANSRQVTFSKRRAGLLKKAHELSVLCDAEVAVIVFSKSGKLFEFSSTSMKKTLLRYGNYQISSDVPGINCKTENQEECTEVDLLKDEISMLQEKHLHMQGKPLNLLSLKELQHLEKQLNFSLISVRERKELLLTKQLEESRLKEQRAELENETLRRQVQELRSFLPSINQHYAPSYIRCFAIDPKNSLLSNTCLGDINCSLQNTNSDTTLQLGLPGEAHDTRKNEGDRESPSSDSVTTSTTRATAQRISLV.

The MADS-box domain maps to 3–57; sequence RGKIEIKRIENANSRQVTFSKRRAGLLKKAHELSVLCDAEVAVIVFSKSGKLFEF. The K-box domain maps to 87–177; sequence NQEECTEVDL…RRQVQELRSF (91 aa). The segment at 223-264 is disordered; the sequence is LQLGLPGEAHDTRKNEGDRESPSSDSVTTSTTRATAQRISLV. Residues 230 to 244 show a composition bias toward basic and acidic residues; it reads EAHDTRKNEGDRESP. Residues 245–257 are compositionally biased toward low complexity; it reads SSDSVTTSTTRAT.

It is found in the nucleus. Functionally, probable transcription factor. The polypeptide is Agamous-like MADS-box protein AGL15 (AGL15) (Brassica napus (Rape)).